A 255-amino-acid chain; its full sequence is Triosephosphate isomerase (255 aa).

9–11 contacts substrate; the sequence is NWK. Catalysis depends on histidine 95, which acts as the Electrophile. Glutamate 167 functions as the Proton acceptor in the catalytic mechanism. Residues glycine 173, serine 212, and 233-234 each bind substrate; that span reads GG.

It belongs to the triosephosphate isomerase family. Homodimer.

Its subcellular location is the cytoplasm. It carries out the reaction D-glyceraldehyde 3-phosphate = dihydroxyacetone phosphate. It functions in the pathway carbohydrate biosynthesis; gluconeogenesis. Its pathway is carbohydrate degradation; glycolysis; D-glyceraldehyde 3-phosphate from glycerone phosphate: step 1/1. In terms of biological role, involved in the gluconeogenesis. Catalyzes stereospecifically the conversion of dihydroxyacetone phosphate (DHAP) to D-glyceraldehyde-3-phosphate (G3P). This is Triosephosphate isomerase from Sodalis glossinidius (strain morsitans).